The following is a 1517-amino-acid chain: DNA-directed RNA polymerase subunit beta' (1517 aa).

Zn(2+)-binding residues include Cys-71, Cys-73, Cys-86, and Cys-89. 3 residues coordinate Mg(2+): Asp-482, Asp-484, and Asp-486. Residues Cys-812, Cys-886, Cys-893, and Cys-896 each contribute to the Zn(2+) site.

Belongs to the RNA polymerase beta' chain family. As to quaternary structure, the RNAP catalytic core consists of 2 alpha, 1 beta, 1 beta' and 1 omega subunit. When a sigma factor is associated with the core the holoenzyme is formed, which can initiate transcription. Mg(2+) is required as a cofactor. Zn(2+) serves as cofactor.

It carries out the reaction RNA(n) + a ribonucleoside 5'-triphosphate = RNA(n+1) + diphosphate. In terms of biological role, DNA-dependent RNA polymerase catalyzes the transcription of DNA into RNA using the four ribonucleoside triphosphates as substrates. In Campylobacter jejuni subsp. jejuni serotype O:23/36 (strain 81-176), this protein is DNA-directed RNA polymerase subunit beta'.